The primary structure comprises 616 residues: Carboxylic acid transporter protein homolog (616 aa).

A compositionally biased stretch (basic and acidic residues) spans 1–11 (MSSSITDEKIS). Positions 1–65 (MSSSITDEKI…LYHNPSLPAQ (65 aa)) are disordered. Position 2 is an N-acetylserine (Ser-2). Residues 2–140 (SSSITDEKIS…LRKMTWQNWN (139 aa)) lie on the Cytoplasmic side of the membrane. Ser-4 carries the phosphoserine modification. Lys-9 is covalently cross-linked (Glycyl lysine isopeptide (Lys-Gly) (interchain with G-Cter in ubiquitin)). 3 positions are modified to phosphoserine: Ser-11, Ser-61, and Ser-66. Thr-70 carries the post-translational modification Phosphothreonine. Residues 141 to 161 (YFFMGYFAWLSAAWAFFCVSV) traverse the membrane as a helical segment. Over 162–176 (SVAPLAELYDRPTKD) the chain is Extracellular. A helical membrane pass occupies residues 177–197 (ITWGLGLVLFVRSAGAVIFGL). Topologically, residues 198-205 (WTDKSSRK) are cytoplasmic. The helical transmembrane segment at 206 to 226 (WPYITCLFLFVIAQLCTPWCD) threads the bilayer. The Extracellular portion of the chain corresponds to 227–230 (TYEK). The helical transmembrane segment at 231 to 251 (FLGVRWITGIAMGGIYGCASA) threads the bilayer. Topologically, residues 252–263 (TAIEDAPVKARS) are cytoplasmic. The chain crosses the membrane as a helical span at residues 264–284 (FLSGLFFSAYAMGFIFAIIFY). The Extracellular segment spans residues 285 to 296 (RAFGYFRDDGWK). Residues 297–317 (ILFWFSIFLPILLIFWRLLWP) traverse the membrane as a helical segment. Residues 318–363 (ETKYFTKVLKARKLILSDAVKANGGEPLPKANFKQKMVSMKRTVQK) lie on the Cytoplasmic side of the membrane. Residue Lys-338 forms a Glycyl lysine isopeptide (Lys-Gly) (interchain with G-Cter in ubiquitin) linkage. The chain crosses the membrane as a helical span at residues 364-384 (YWLLFAYLVVLLVGPNYLTHA). The Extracellular portion of the chain corresponds to 385–402 (SQDLLPTMLRAQLGLSKD). Residues 403 to 423 (AVTVIVVVTNIGAICGGMIFG) traverse the membrane as a helical segment. Topologically, residues 424 to 432 (QFMEVTGRR) are cytoplasmic. Residues 433–453 (LGLLIACTMGGCFTYPAFMLR) traverse the membrane as a helical segment. Residues 454 to 457 (SEKA) are Extracellular-facing. A helical membrane pass occupies residues 458–478 (ILGAGFMLYFCVFGVWGILPI). Topologically, residues 479-489 (HLAELAPADAR) are cytoplasmic. A helical membrane pass occupies residues 490–510 (ALVAGLSYQLGNLASAAASTI). The Extracellular portion of the chain corresponds to 511–535 (ETQLADRYPLERDASGAVIKEDYAK). A helical transmembrane segment spans residues 536–556 (VMAILTGSVFIFTFACVFVGH). Over 557–616 (EKFHRDLSSPVMKKYINQVEEYEADGLSISDIVEQKTECASVKMIDSNVSKTYEEHIETV) the chain is Cytoplasmic. Phosphoserine occurs at positions 584, 603, and 606.

The protein belongs to the major facilitator superfamily. Sugar transporter (TC 2.A.1.1) family.

The protein localises to the membrane. In terms of biological role, essential to lactate transport. This Saccharomyces cerevisiae (strain ATCC 204508 / S288c) (Baker's yeast) protein is Carboxylic acid transporter protein homolog (JEN1).